Consider the following 508-residue polypeptide: Cobyric acid synthase (508 aa).

A GATase cobBQ-type domain is found at 255-454 (ELNIAVLKLP…LHGVFESGPW (200 aa)). The Nucleophile role is filled by Cys336. His446 is an active-site residue.

The protein belongs to the CobB/CobQ family. CobQ subfamily.

Its pathway is cofactor biosynthesis; adenosylcobalamin biosynthesis. Catalyzes amidations at positions B, D, E, and G on adenosylcobyrinic A,C-diamide. NH(2) groups are provided by glutamine, and one molecule of ATP is hydrogenolyzed for each amidation. This Synechococcus sp. (strain CC9311) protein is Cobyric acid synthase.